A 506-amino-acid chain; its full sequence is Galactose/methyl galactoside import ATP-binding protein MglA (506 aa).

ABC transporter domains are found at residues 14–249 (LTMT…VGRE) and 260–506 (VPKE…AKYL). 46 to 53 (GENGAGKS) is a binding site for ATP.

It belongs to the ABC transporter superfamily. Galactose/methyl galactoside importer (TC 3.A.1.2.3) family. In terms of assembly, the complex is composed of one ATP-binding protein (MglA), two transmembrane proteins (MglC) and a solute-binding protein (MglB).

It is found in the cell inner membrane. The enzyme catalyses D-galactose(out) + ATP + H2O = D-galactose(in) + ADP + phosphate + H(+). It carries out the reaction methyl beta-D-galactoside(out) + ATP + H2O = methyl beta-D-galactoside(in) + ADP + phosphate + H(+). Its function is as follows. Part of the ABC transporter complex MglABC involved in galactose/methyl galactoside import. Responsible for energy coupling to the transport system. This Haemophilus influenzae (strain 86-028NP) protein is Galactose/methyl galactoside import ATP-binding protein MglA.